The chain runs to 486 residues: 2-hydroxymuconic semialdehyde dehydrogenase (486 aa).

Catalysis depends on residues Glu-254 and Cys-288.

This sequence belongs to the aldehyde dehydrogenase family. In terms of assembly, homodimer.

It catalyses the reaction (2Z,4E)-2-hydroxy-6-oxohexa-2,4-dienoate + NAD(+) + H2O = (2Z,4E)-2-hydroxyhexa-2,4-dienedioate + NADH + 2 H(+). The protein operates within aromatic compound metabolism; benzoate degradation via hydroxylation. Functionally, 2-hydroxymuconic acid semialdehyde can be converted to 2-hydroxypent-2,4-dienoate either directly by the action of 2-hydroxymuconic semialdehyde hydrolase (HMSH) or by the action of three sequential enzymes, the first of which is HMSD. Can oxidize not only 2-hydroxymuconic semialdehyde and its analogs but also benzaldehyde and its analogs. This Pseudomonas putida (Arthrobacter siderocapsulatus) protein is 2-hydroxymuconic semialdehyde dehydrogenase (xylG).